The chain runs to 316 residues: UDP-N-acetylenolpyruvoylglucosamine reductase (316 aa).

The 165-residue stretch at 30 to 194 (VGGEADYLVF…LSVKFALAPG (165 aa)) folds into the FAD-binding PCMH-type domain. Arginine 173 is a catalytic residue. The active-site Proton donor is serine 223. Glutamate 293 is a catalytic residue.

It belongs to the MurB family. FAD serves as cofactor.

It localises to the cytoplasm. It catalyses the reaction UDP-N-acetyl-alpha-D-muramate + NADP(+) = UDP-N-acetyl-3-O-(1-carboxyvinyl)-alpha-D-glucosamine + NADPH + H(+). The protein operates within cell wall biogenesis; peptidoglycan biosynthesis. Functionally, cell wall formation. The sequence is that of UDP-N-acetylenolpyruvoylglucosamine reductase from Streptococcus pneumoniae serotype 19F (strain G54).